A 293-amino-acid chain; its full sequence is Xyloglucan endotransglucosylase/hydrolase protein 31 (293 aa).

A signal peptide spans 1–20 (MALSLIFLALLVLCPSSGHS). The region spanning 29-230 (YPSSRVPTSP…YRYQPFVAKY (202 aa)) is the GH16 domain. The active-site Nucleophile is Glu-114. Glu-118 (proton donor) is an active-site residue. Xyloglucan is bound by residues Glu-118, 131 to 133 (QTN), 141 to 148 (DRNVIGRE), and 209 to 210 (DW). 2 disulfide bridges follow: Cys-238/Cys-246 and Cys-280/Cys-293. Arg-285 is a binding site for xyloglucan.

It belongs to the glycosyl hydrolase 16 family. XTH group 3 subfamily. Interacts with XTH17. The formation of an XTH17-XTH31 dimer may be required for XET activity. Contains at least one intrachain disulfide bond essential for its enzymatic activity. As to expression, predominantly expressed in root. Weakly expressed in influorescence stems. Expressed in root tips and elongation zones, stems, young leaves, flowers and siliques. Expressed in root, hypocotyl, and etiolated whole seedlings.

Its subcellular location is the secreted. It is found in the cell wall. The protein localises to the extracellular space. It localises to the apoplast. The protein resides in the cell membrane. It catalyses the reaction breaks a beta-(1-&gt;4) bond in the backbone of a xyloglucan and transfers the xyloglucanyl segment on to O-4 of the non-reducing terminal glucose residue of an acceptor, which can be a xyloglucan or an oligosaccharide of xyloglucan.. The enzyme catalyses xyloglucan + H2O = xyloglucan oligosaccharides.. Functionally, catalyzes xyloglucan endohydrolysis (XEH) and/or endotransglycosylation (XET). Cleaves and religates xyloglucan polymers, an essential constituent of the primary cell wall, and thereby participates in cell wall construction of growing tissues. Involved in the accumulation of hemicelluloses. Has a high XEH activity and only a slight XET activity in vitro, but the main in planta activity seems to be XET, thus controlling aluminum sensitivity. Acceptor preferences are XXXGol = XXFGol &gt; XXLGol &gt; XLLGol = XLFGol. This is Xyloglucan endotransglucosylase/hydrolase protein 31 from Arabidopsis thaliana (Mouse-ear cress).